We begin with the raw amino-acid sequence, 250 residues long: Probable transcriptional regulatory protein Ppha_0657 (250 aa).

This sequence belongs to the TACO1 family.

Its subcellular location is the cytoplasm. This is Probable transcriptional regulatory protein Ppha_0657 from Pelodictyon phaeoclathratiforme (strain DSM 5477 / BU-1).